Consider the following 92-residue polypeptide: Large ribosomal subunit protein eL42 (92 aa).

Residues cysteine 11, cysteine 14, cysteine 70, and cysteine 73 each contribute to the Zn(2+) site. A C4-type zinc finger spans residues 11-73 (CPNCRKHTVH…LDLRLKCKEC (63 aa)).

This sequence belongs to the eukaryotic ribosomal protein eL42 family. As to quaternary structure, part of the 50S ribosomal subunit. Zn(2+) is required as a cofactor.

Functionally, binds to the 23S rRNA. This Methanothermobacter thermautotrophicus (strain ATCC 29096 / DSM 1053 / JCM 10044 / NBRC 100330 / Delta H) (Methanobacterium thermoautotrophicum) protein is Large ribosomal subunit protein eL42.